Here is an 85-residue protein sequence, read N- to C-terminus: Small ribosomal subunit protein bS16c (85 aa).

The protein belongs to the bacterial ribosomal protein bS16 family.

It is found in the plastid. The protein resides in the chloroplast. The polypeptide is Small ribosomal subunit protein bS16c (Nicotiana tabacum (Common tobacco)).